A 419-amino-acid chain; its full sequence is Gamma-glutamyl phosphate reductase (419 aa).

It belongs to the gamma-glutamyl phosphate reductase family.

The protein resides in the cytoplasm. It carries out the reaction L-glutamate 5-semialdehyde + phosphate + NADP(+) = L-glutamyl 5-phosphate + NADPH + H(+). It functions in the pathway amino-acid biosynthesis; L-proline biosynthesis; L-glutamate 5-semialdehyde from L-glutamate: step 2/2. Catalyzes the NADPH-dependent reduction of L-glutamate 5-phosphate into L-glutamate 5-semialdehyde and phosphate. The product spontaneously undergoes cyclization to form 1-pyrroline-5-carboxylate. The sequence is that of Gamma-glutamyl phosphate reductase from Bordetella parapertussis (strain 12822 / ATCC BAA-587 / NCTC 13253).